An 89-amino-acid polypeptide reads, in one-letter code: MSLSTEAKAKIVAEFGRDANDTGSSEVQIALLTAEINHLQGHFSEHKKDHHSRRGLLRKVSSRRNLLDYLKRKDVARYTALIERLGLRR.

The protein belongs to the universal ribosomal protein uS15 family. Part of the 30S ribosomal subunit. Forms a bridge to the 50S subunit in the 70S ribosome, contacting the 23S rRNA.

In terms of biological role, one of the primary rRNA binding proteins, it binds directly to 16S rRNA where it helps nucleate assembly of the platform of the 30S subunit by binding and bridging several RNA helices of the 16S rRNA. Its function is as follows. Forms an intersubunit bridge (bridge B4) with the 23S rRNA of the 50S subunit in the ribosome. The chain is Small ribosomal subunit protein uS15 from Proteus mirabilis (strain HI4320).